A 632-amino-acid chain; its full sequence is Transcription factor asR4 (632 aa).

Positions 26–52 (CDSCNKSKTKCPGGNPCPLCQCSGIRC) form a DNA-binding region, zn(2)-C6 fungal-type. Residues 101 to 111 (HISSNPSPVGS) show a composition bias toward polar residues. Disordered stretches follow at residues 101 to 129 (HISS…QQQQ), 270 to 311 (SNEY…GDGH), and 324 to 356 (TSAS…VPRT). Positions 112 to 129 (QSQQQQHPQQAGQQQQQQ) are enriched in low complexity. 3 stretches are compositionally biased toward polar residues: residues 270-286 (SNEY…TTDD), 294-306 (PDSS…SSSV), and 329-340 (IVEQQSIPTSPV).

Its subcellular location is the nucleus. Functionally, transcription factor; part of the gene cluster that mediates the biosynthesis of xenovulene A, an unusual meroterpenoid that has potent inhibitory effects on the human gamma-aminobutyrate A (GABAA) benzodiazepine receptor. This chain is Transcription factor asR4, found in Sarocladium schorii (Acremonium strictum (strain IMI 501407)).